Here is a 69-residue protein sequence, read N- to C-terminus: MGMRMMFTVFLLVVLATTVVSTPSDRASDGRNAAVHERQKSLVPSVITTCCGYDPGTMCPPCRCTNSCG.

The signal sequence occupies residues 1–21 (MGMRMMFTVFLLVVLATTVVS). The propeptide occupies 22–38 (TPSDRASDGRNAAVHER). Position 39 is a pyrrolidone carboxylic acid (glutamine 39). O-linked (HexNAc...) serine glycosylation occurs at serine 45. 3 positions are modified to 4-hydroxyproline: proline 55, proline 60, and proline 61. Cysteine 68 bears the Cysteine amide mark.

This sequence belongs to the conotoxin A superfamily. Contains 3 disulfide bonds. In terms of processing, O-linked glycan consists of Hex3-HexNAc2 pentasaccharide. In terms of tissue distribution, expressed by the venom duct.

The protein resides in the secreted. Its function is as follows. Neurotoxin with probable activity on sodium channel. Induces intense repetitive firing of the frog neuromuscular junction, leading to a tetanic contracture in muscle fiber (spastic paralysis). In vivo, shows the same effect as the whole venom when injected on fish. Intraperitoneal injection into fish induces a period of rapid swimming followed by a spastic paralysis with stiff fibrillating fins. At high doses, the peptide is lethal to both fish and mice. This Conus striatus (Striated cone) protein is Conotoxin SIVA.